Here is a 417-residue protein sequence, read N- to C-terminus: Calreticulin (417 aa).

Positions 1 to 17 (MLLSVPLLLGLLGLAVA) are cleaved as a signal peptide. Residues 18–197 (EPAVYFKEQF…NSQVESGSLE (180 aa)) form an N-domain region. Q26 contributes to the Ca(2+) binding site. K48 is modified (N6-acetyllysine). Residues K62 and K64 each coordinate Ca(2+). At K64 the chain carries N6-(2-hydroxyisobutyryl)lysine. C105 and C137 form a disulfide bridge. Y109, K111, Y128, and D135 together coordinate an alpha-D-glucoside. K159 bears the N6-acetyllysine mark. Residues 191 to 202 (VESGSLEDDWDF) form a 1-1 repeat. A 4 X approximate repeats region spans residues 191-255 (VESGSLEDDW…DAKKPEDWDE (65 aa)). The tract at residues 193 to 278 (SGSLEDDWDF…PEYKGEWKPR (86 aa)) is disordered. The interval 198 to 308 (DDWDFLPPKK…YSPDPSIYAY (111 aa)) is P-domain. A compositionally biased stretch (basic and acidic residues) spans 207-251 (KIKDPDASKPEDWDERAKIDDPTDSKPEDWDKPEHIPDPDAKKPE). K209 carries the N6-acetyllysine modification. 6 tandem repeats follow at residues 210–221 (DPDASKPEDWDE), 227–238 (DPTDSKPEDWDK), 244–255 (DPDAKKPEDWDE), 259–269 (GEWEPPVIQNP), 273–283 (GEWKPRQIDNP), and 287–297 (GTWIHPEIDNP). Positions 237–270 (DKPEHIPDPDAKKPEDWDEEMDGEWEPPVIQNPE) are interaction with PPIB. The span at 252-261 (DWDEEMDGEW) shows a compositional bias: acidic residues. The interval 259 to 297 (GEWEPPVIQNPEYKGEWKPRQIDNPDYKGTWIHPEIDNP) is 3 X approximate repeats. The interval 309-417 (DNFGVLGLDL…DVPGQAKDEL (109 aa)) is C-domain. Residue D317 participates in an alpha-D-glucoside binding. D328 contacts Ca(2+). A glycan (N-linked (GlcNAc...) asparagine) is linked at N344. Residues 350–417 (TKAAEKQMKD…DVPGQAKDEL (68 aa)) are disordered. Positions 352–379 (AAEKQMKDKQDEEQRLKEEEEDKKRKEE) are enriched in basic and acidic residues. Acidic residues predominate over residues 380–409 (EEAEDKEDDEDKDEDEEDEEDKEEDEEEDV). Positions 414-417 (KDEL) match the Prevents secretion from ER motif.

The protein belongs to the calreticulin family. Monomer. Component of an EIF2 complex at least composed of CELF1/CUGBP1, CALR, CALR3, EIF2S1, EIF2S2, HSP90B1 and HSPA5. Interacts with PDIA3/ERp57 and SPACA9. Interacts with TRIM21. Interacts with NR3C1. Interacts with PPIB. Interacts (via P-domain) with PDIA5. Interacts with GABARAP. Interacts with HLA-E-B2M and HLA-G-B2M complexes. Interacts with HLA-F. Interacts with CLCC1.

Its subcellular location is the endoplasmic reticulum lumen. The protein resides in the cytoplasm. The protein localises to the cytosol. It localises to the secreted. It is found in the extracellular space. Its subcellular location is the extracellular matrix. The protein resides in the cell surface. The protein localises to the sarcoplasmic reticulum lumen. It localises to the cytoplasmic vesicle. It is found in the secretory vesicle. Its subcellular location is the cortical granule. The protein resides in the cytolytic granule. Functionally, calcium-binding chaperone that promotes folding, oligomeric assembly and quality control in the endoplasmic reticulum (ER) via the calreticulin/calnexin cycle. This lectin interacts transiently with almost all of the monoglucosylated glycoproteins that are synthesized in the ER. Interacts with the DNA-binding domain of NR3C1 and mediates its nuclear export. Involved in maternal gene expression regulation. May participate in oocyte maturation via the regulation of calcium homeostasis. Present in the cortical granules of non-activated oocytes, is exocytosed during the cortical reaction in response to oocyte activation and might participate in the block to polyspermy. The chain is Calreticulin from Homo sapiens (Human).